We begin with the raw amino-acid sequence, 209 residues long: Ribonuclease HII (209 aa).

Residues 5-202 (SMTLGIDEAG…KNRILNPKLL (198 aa)) enclose the RNase H type-2 domain. Residues D11, E12, and D108 each coordinate a divalent metal cation.

It belongs to the RNase HII family. Requires Mn(2+) as cofactor. Mg(2+) is required as a cofactor.

The protein localises to the cytoplasm. The enzyme catalyses Endonucleolytic cleavage to 5'-phosphomonoester.. In terms of biological role, endonuclease that specifically degrades the RNA of RNA-DNA hybrids. In Helicobacter pylori (strain J99 / ATCC 700824) (Campylobacter pylori J99), this protein is Ribonuclease HII (rnhB).